The chain runs to 427 residues: Septin-8-A (427 aa).

Positions 39-305 constitute a Septin-type G domain; the sequence is QGFCFNILCV…ELYRRCKLEE (267 aa). Residues 49–56 form a G1 motif region; that stretch reads GETGIGKS. GTP-binding positions include 49–56, Gly-104, 185–193, Gly-239, and Arg-254; these read GETGIGKS and KADTISKSE. Residues 101-104 form a G3 motif region; that stretch reads DTVG. The segment at 184–187 is G4 motif; the sequence is AKAD. The stretch at 320-409 forms a coiled coil; it reads LQETYEAKRK…KAAMEALQSQ (90 aa). Positions 376–389 are enriched in basic and acidic residues; the sequence is QEESKKVEDKRRDL. Residues 376-427 are disordered; the sequence is QEESKKVEDKRRDLEEEMNSFNRRKAAMEALQSQSFQATSQQPLKKDKDRKN. The segment covering 406 to 418 has biased composition (polar residues); it reads LQSQSFQATSQQP.

Belongs to the TRAFAC class TrmE-Era-EngA-EngB-Septin-like GTPase superfamily. Septin GTPase family.

The polypeptide is Septin-8-A (sept8-a) (Xenopus laevis (African clawed frog)).